Here is a 154-residue protein sequence, read N- to C-terminus: 6,7-dimethyl-8-ribityllumazine synthase (154 aa).

5-amino-6-(D-ribitylamino)uracil is bound by residues phenylalanine 21, 55–57 (AFE), and 79–81 (CVI). 84–85 (AT) provides a ligand contact to (2S)-2-hydroxy-3-oxobutyl phosphate. The active-site Proton donor is the histidine 87. Phenylalanine 112 is a binding site for 5-amino-6-(D-ribitylamino)uracil. Arginine 126 provides a ligand contact to (2S)-2-hydroxy-3-oxobutyl phosphate.

It belongs to the DMRL synthase family. Forms an icosahedral capsid composed of 60 subunits, arranged as a dodecamer of pentamers.

It carries out the reaction (2S)-2-hydroxy-3-oxobutyl phosphate + 5-amino-6-(D-ribitylamino)uracil = 6,7-dimethyl-8-(1-D-ribityl)lumazine + phosphate + 2 H2O + H(+). The protein operates within cofactor biosynthesis; riboflavin biosynthesis; riboflavin from 2-hydroxy-3-oxobutyl phosphate and 5-amino-6-(D-ribitylamino)uracil: step 1/2. Catalyzes the formation of 6,7-dimethyl-8-ribityllumazine by condensation of 5-amino-6-(D-ribitylamino)uracil with 3,4-dihydroxy-2-butanone 4-phosphate. This is the penultimate step in the biosynthesis of riboflavin. In Staphylococcus aureus (strain Newman), this protein is 6,7-dimethyl-8-ribityllumazine synthase.